A 546-amino-acid chain; its full sequence is CTP synthase (546 aa).

Residues 1–266 (MTTNYIFVTG…DDLVCTRFGI (266 aa)) are amidoligase domain. CTP is bound at residue Ser14. Ser14 is a binding site for UTP. ATP is bound by residues 15-20 (SLGKGI) and Asp72. Positions 72 and 140 each coordinate Mg(2+). CTP-binding positions include 147 to 149 (DIE), 187 to 192 (KTKPTQ), and Lys223. Residues 187-192 (KTKPTQ) and Lys223 contribute to the UTP site. 239–241 (KDV) lines the ATP pocket. Positions 291–542 (TIGMVGKYIE…VKAAGQYSRG (252 aa)) constitute a Glutamine amidotransferase type-1 domain. Gly352 contacts L-glutamine. Cys379 functions as the Nucleophile; for glutamine hydrolysis in the catalytic mechanism. L-glutamine-binding positions include 380–383 (LGMQ), Glu403, and Arg470. Active-site residues include His515 and Glu517.

This sequence belongs to the CTP synthase family. Homotetramer.

The catalysed reaction is UTP + L-glutamine + ATP + H2O = CTP + L-glutamate + ADP + phosphate + 2 H(+). It carries out the reaction L-glutamine + H2O = L-glutamate + NH4(+). It catalyses the reaction UTP + NH4(+) + ATP = CTP + ADP + phosphate + 2 H(+). It functions in the pathway pyrimidine metabolism; CTP biosynthesis via de novo pathway; CTP from UDP: step 2/2. Its activity is regulated as follows. Allosterically activated by GTP, when glutamine is the substrate; GTP has no effect on the reaction when ammonia is the substrate. The allosteric effector GTP functions by stabilizing the protein conformation that binds the tetrahedral intermediate(s) formed during glutamine hydrolysis. Inhibited by the product CTP, via allosteric rather than competitive inhibition. Its function is as follows. Catalyzes the ATP-dependent amination of UTP to CTP with either L-glutamine or ammonia as the source of nitrogen. Regulates intracellular CTP levels through interactions with the four ribonucleotide triphosphates. The chain is CTP synthase from Vibrio parahaemolyticus serotype O3:K6 (strain RIMD 2210633).